The sequence spans 322 residues: Phosphatidylglycerol--prolipoprotein diacylglyceryl transferase (322 aa).

4 helical membrane-spanning segments follow: residues 21–41 (PLPIRAYAMCIIAGIIVAIWL), 50–70 (GGNPEVVLDAAIVAVPAGIIG), 98–118 (NGGLGIWGAVILGGLAVWAYF), and 123–143 (IPLAPFADAVAPGVILAQAIG). Arg-144 is a binding site for a 1,2-diacyl-sn-glycero-3-phospho-(1'-sn-glycerol). Helical transmembrane passes span 191-211 (VHPTFLYEMLWNLLIFGLLIW) and 254-274 (INTLVSAVVFILAVIVFLRLG). The segment at 283 to 322 (VDPAYHAAQAERDDTETAGLDATTGTVPGDSPETTGKKRK) is disordered.

The protein belongs to the Lgt family.

Its subcellular location is the cell membrane. It catalyses the reaction L-cysteinyl-[prolipoprotein] + a 1,2-diacyl-sn-glycero-3-phospho-(1'-sn-glycerol) = an S-1,2-diacyl-sn-glyceryl-L-cysteinyl-[prolipoprotein] + sn-glycerol 1-phosphate + H(+). It functions in the pathway protein modification; lipoprotein biosynthesis (diacylglyceryl transfer). Catalyzes the transfer of the diacylglyceryl group from phosphatidylglycerol to the sulfhydryl group of the N-terminal cysteine of a prolipoprotein, the first step in the formation of mature lipoproteins. This Corynebacterium efficiens (strain DSM 44549 / YS-314 / AJ 12310 / JCM 11189 / NBRC 100395) protein is Phosphatidylglycerol--prolipoprotein diacylglyceryl transferase.